Reading from the N-terminus, the 314-residue chain is Putative S-adenosyl-L-methionine-dependent methyltransferase MAV_0301 (314 aa).

S-adenosyl-L-methionine is bound by residues Asp-132 and 161–162 (DL).

The protein belongs to the UPF0677 family.

In terms of biological role, exhibits S-adenosyl-L-methionine-dependent methyltransferase activity. The chain is Putative S-adenosyl-L-methionine-dependent methyltransferase MAV_0301 from Mycobacterium avium (strain 104).